Consider the following 1227-residue polypeptide: Beta-alanyl-bioamine nonribosomal peptide synthetase (1227 aa).

The adenylation stretch occupies residues 1 to 850 (MPQSTAQLKS…FGKNSRDFKL (850 aa)). The region spanning 851-931 (SRGRERARKV…SILTSLQNTE (81 aa)) is the Carrier domain. S892 carries the post-translational modification O-(pantetheine 4'-phosphoryl)serine. The condensation stretch occupies residues 932 to 1227 (SDFLKTQEPF…YMIKELNPSS (296 aa)).

Belongs to the NRP synthetase family. Requires pantetheine 4'-phosphate as cofactor. In terms of tissue distribution, in virgin and paired males, bilaterally expressed in some cells in the head. During pairing, expressed throughout the ventral side of the body probably in ciliated neurons. Highly expressed in virgin females in cells throughout the body and only weakly expressed in sexually mature females. In virgin females, expressed in some cells in the head and on the dorsal surface and lateral edges of body.

The enzyme catalyses tryptamine + beta-alanine + ATP = beta-alanyl-tryptamine + AMP + diphosphate + H(+). The catalysed reaction is beta-alanine + ATP + H(+) = beta-alanyl-5'-AMP + diphosphate. It catalyses the reaction beta-alanyl-5'-AMP + holo-[peptidyl-carrier protein] = beta-alanyl-[peptidyl-carrier protein] + AMP + H(+). It carries out the reaction beta-alanyl-[peptidyl-carrier protein] + tryptamine = beta-alanyl-tryptamine + holo-[peptidyl-carrier protein] + H(+). In terms of biological role, catalyzes the condensation of beta-alanine with tryptamine to form beta-alanyl-tryptamine (BATT). Beta-alanyl-tryptamine is an essential pheromone produced by the male that stimulates female sexual development during pairing. In Schistosoma mansoni (Blood fluke), this protein is Beta-alanyl-bioamine nonribosomal peptide synthetase.